A 939-amino-acid polypeptide reads, in one-letter code: Translation initiation factor IF-2 (939 aa).

A compositionally biased stretch (basic and acidic residues) spans 81 to 94 (EEQSRKAYEKEQQL). Disordered regions lie at residues 81–303 (EEQS…KKVE) and 316–337 (TISG…KMRR). Residues 99–108 (SSAPSPAPAA) are compositionally biased toward low complexity. Basic and acidic residues-rich tracts occupy residues 112 to 127 (EPVK…RHEP) and 148 to 173 (SPKE…EKAA). Low complexity predominate over residues 178 to 189 (EAQPEAQSQQEP). Residues 244–255 (FKENAAELKDEF) show a composition bias toward basic and acidic residues. Over residues 276–287 (AAGEGESTTGGE) the composition is skewed to low complexity. A compositionally biased stretch (basic residues) spans 292 to 301 (KKKKGKKKKK). Low complexity predominate over residues 318-328 (SGMDDSGSSGS). In terms of domain architecture, tr-type G spans 436 to 606 (TRPPVVTIMG…LTEAEVRELK (171 aa)). Residues 445 to 452 (GHVDHGKT) are G1. Residue 445 to 452 (GHVDHGKT) participates in GTP binding. The G2 stretch occupies residues 470–474 (GITQH). The interval 492–495 (DTPG) is G3. GTP is bound by residues 492-496 (DTPGH) and 546-549 (NKID). Residues 546 to 549 (NKID) are G4. The G5 stretch occupies residues 582–584 (SAK).

The protein belongs to the TRAFAC class translation factor GTPase superfamily. Classic translation factor GTPase family. IF-2 subfamily.

The protein localises to the cytoplasm. Functionally, one of the essential components for the initiation of protein synthesis. Protects formylmethionyl-tRNA from spontaneous hydrolysis and promotes its binding to the 30S ribosomal subunits. Also involved in the hydrolysis of GTP during the formation of the 70S ribosomal complex. In Chlorobaculum parvum (strain DSM 263 / NCIMB 8327) (Chlorobium vibrioforme subsp. thiosulfatophilum), this protein is Translation initiation factor IF-2.